We begin with the raw amino-acid sequence, 325 residues long: ATP phosphoribosyltransferase (325 aa).

The protein belongs to the ATP phosphoribosyltransferase family. Long subfamily. It depends on Mg(2+) as a cofactor.

The protein localises to the cytoplasm. It catalyses the reaction 1-(5-phospho-beta-D-ribosyl)-ATP + diphosphate = 5-phospho-alpha-D-ribose 1-diphosphate + ATP. It participates in amino-acid biosynthesis; L-histidine biosynthesis; L-histidine from 5-phospho-alpha-D-ribose 1-diphosphate: step 1/9. With respect to regulation, feedback inhibited by histidine. Functionally, catalyzes the condensation of ATP and 5-phosphoribose 1-diphosphate to form N'-(5'-phosphoribosyl)-ATP (PR-ATP). Has a crucial role in the pathway because the rate of histidine biosynthesis seems to be controlled primarily by regulation of HisG enzymatic activity. The protein is ATP phosphoribosyltransferase of Afipia carboxidovorans (strain ATCC 49405 / DSM 1227 / KCTC 32145 / OM5) (Oligotropha carboxidovorans).